Here is a 365-residue protein sequence, read N- to C-terminus: tRNA N6-adenosine threonylcarbamoyltransferase (365 aa).

Fe cation contacts are provided by histidine 119 and histidine 123. Substrate contacts are provided by residues 141–145 (LVSGG), aspartate 174, glycine 187, and asparagine 288. Aspartate 316 lines the Fe cation pocket.

It belongs to the KAE1 / TsaD family. Requires Fe(2+) as cofactor.

The protein localises to the cytoplasm. The enzyme catalyses L-threonylcarbamoyladenylate + adenosine(37) in tRNA = N(6)-L-threonylcarbamoyladenosine(37) in tRNA + AMP + H(+). Its function is as follows. Required for the formation of a threonylcarbamoyl group on adenosine at position 37 (t(6)A37) in tRNAs that read codons beginning with adenine. Is involved in the transfer of the threonylcarbamoyl moiety of threonylcarbamoyl-AMP (TC-AMP) to the N6 group of A37, together with TsaE and TsaB. TsaD likely plays a direct catalytic role in this reaction. The sequence is that of tRNA N6-adenosine threonylcarbamoyltransferase from Agrobacterium fabrum (strain C58 / ATCC 33970) (Agrobacterium tumefaciens (strain C58)).